Here is a 116-residue protein sequence, read N- to C-terminus: Large ribosomal subunit protein bL20 (116 aa).

Belongs to the bacterial ribosomal protein bL20 family.

In terms of biological role, binds directly to 23S ribosomal RNA and is necessary for the in vitro assembly process of the 50S ribosomal subunit. It is not involved in the protein synthesizing functions of that subunit. The sequence is that of Large ribosomal subunit protein bL20 from Desulfosudis oleivorans (strain DSM 6200 / JCM 39069 / Hxd3) (Desulfococcus oleovorans).